The primary structure comprises 347 residues: DnaJ homolog subfamily C member 22 (347 aa).

One can recognise a TM2 domain in the interval Gly4–Trp50. The next 7 helical transmembrane spans lie at Leu5–Leu25, Leu32–Leu52, Phe81–Phe101, Phe105–Gly125, Leu135–Ile155, Gly186–Val206, and Phe218–Leu238. The J domain maps to Leu277–Phe347.

It localises to the membrane. May function as a co-chaperone. The protein is DnaJ homolog subfamily C member 22 (DNAJC22) of Bos taurus (Bovine).